A 189-amino-acid polypeptide reads, in one-letter code: Thermostable direct hemolysin (189 aa).

The first 24 residues, 1 to 24, serve as a signal peptide directing secretion; that stretch reads MKYQYFAKKSFLFISMLAAFKTFA. A disulfide bridge links Cys-175 with Cys-185.

The protein belongs to the TDH hemolysin family. Homodimer.

In terms of biological role, bacterial hemolysins are exotoxins that attack blood cell membranes and cause cell rupture by mechanisms not clearly defined. This Vibrio mimicus protein is Thermostable direct hemolysin (tdh).